We begin with the raw amino-acid sequence, 173 residues long: Ribosome maturation factor RimM (173 aa).

A PRC barrel domain is found at 78-157 (EEEFYLADLI…VLVVPPEEVE (80 aa)). The tract at residues 152-173 (PPEEVEAQEPPEKDAGGDEPSP) is disordered.

This sequence belongs to the RimM family. Binds ribosomal protein uS19.

It is found in the cytoplasm. In terms of biological role, an accessory protein needed during the final step in the assembly of 30S ribosomal subunit, possibly for assembly of the head region. Essential for efficient processing of 16S rRNA. May be needed both before and after RbfA during the maturation of 16S rRNA. It has affinity for free ribosomal 30S subunits but not for 70S ribosomes. The sequence is that of Ribosome maturation factor RimM from Beijerinckia indica subsp. indica (strain ATCC 9039 / DSM 1715 / NCIMB 8712).